Reading from the N-terminus, the 607-residue chain is Matrix metalloproteinase-16 (607 aa).

Residues 1 to 31 (MILLAFSSGRRLDFVHRSGVFFFQTLLWILC) form the signal peptide. Residues 32 to 119 (ATVCGTEQYF…SSKFNIRRKR (88 aa)) constitute a propeptide that is removed on maturation. An N-linked (GlcNAc...) asparagine glycan is attached at asparagine 83. The Cysteine switch motif lies at 99–106 (PRCGVPDQ). Cysteine 101 lines the Zn(2+) pocket. The Extracellular portion of the chain corresponds to 120–564 (YALTGQKWQH…LDNTASTVKA (445 aa)). Aspartate 183 lines the Ca(2+) pocket. 2 residues coordinate Zn(2+): histidine 193 and aspartate 195. Aspartate 200, glycine 201, glycine 203, and phenylalanine 205 together coordinate Ca(2+). Zn(2+) is bound at residue histidine 208. Ca(2+) contacts are provided by glycine 215, glycine 217, and aspartate 219. Histidine 221 serves as a coordination point for Zn(2+). Ca(2+) contacts are provided by aspartate 223 and glutamate 226. Histidine 246 is a binding site for Zn(2+). Glutamate 247 is a catalytic residue. Zn(2+) contacts are provided by histidine 250 and histidine 256. Positions 281 to 340 (DDLQGIQKIYGPPDKIPPPTRPLPTVPPHRSVPPADPRKNDRPKPPRPPTGRPSYPGAKP) are disordered. Residues 294–315 (DKIPPPTRPLPTVPPHRSVPPA) show a composition bias toward pro residues. 4 Hemopexin repeats span residues 340–388 (PNIC…WRGL), 389–434 (PPSI…GNGI), 436–484 (PHGI…KGIP), and 485–532 (ESPQ…FMGC). Cysteine 343 and cysteine 532 form a disulfide bridge. The helical transmembrane segment at 565–585 (IAIVIPCILALCLLVLVYTVF) threads the bilayer. At 586 to 607 (QFKRKGTPRHILYCKRSMQEWV) the chain is on the cytoplasmic side.

It belongs to the peptidase M10A family. Interacts with CSPG4 through CSPG4 chondroitin sulfate glycosaminoglycan. It depends on Zn(2+) as a cofactor. Ca(2+) serves as cofactor. In terms of processing, the precursor is cleaved by a furin endopeptidase. As to expression, strongly expressed in the lung, brain and smooth muscle cells. Weakly detectable in the spleen and liver and indetectable in the heart, skeletal muscle and kidney.

It localises to the cell membrane. It is found in the secreted. The protein resides in the extracellular space. The protein localises to the extracellular matrix. In terms of biological role, endopeptidase that degrades various components of the extracellular matrix, such as collagen type III and fibronectin. Activates progelatinase A. Involved in the matrix remodeling of blood vessels. The short isoform efficiently converts progelatinase A to the intermediate form but not to the mature one. It has no effect on type I, II, IV and V collagen. However, upon interaction with CSPG4, it may be involved in degradation and invasion of type I collagen by melanoma cells. The polypeptide is Matrix metalloproteinase-16 (Mmp16) (Rattus norvegicus (Rat)).